Consider the following 146-residue polypeptide: UPF0178 protein OB0454 (146 aa).

It belongs to the UPF0178 family.

This Oceanobacillus iheyensis (strain DSM 14371 / CIP 107618 / JCM 11309 / KCTC 3954 / HTE831) protein is UPF0178 protein OB0454.